The chain runs to 219 residues: Trafficking protein particle complex subunit 4 (219 aa).

The protein belongs to the TRAPP small subunits family. TRAPPC4 subfamily. As to quaternary structure, component of the multisubunit TRAPP (transport protein particle) complex, which includes at least TRAPPC2, TRAPPC2L, TRAPPC3, TRAPPC3L, TRAPPC4, TRAPPC5, TRAPPC8, TRAPPC9, TRAPPC10, TRAPPC11 and TRAPPC12. Interacts with SDC2. In terms of tissue distribution, widely expressed.

It localises to the postsynaptic cell membrane. The protein resides in the golgi apparatus membrane. It is found in the endoplasmic reticulum. The protein localises to the vesicle. In terms of biological role, core component of the TRAPP complexes which has a function of guanine nucleotide exchange factor activity for Rab1 GTPase. Plays a role in vesicular transport from endoplasmic reticulum to Golgi and autophagy. May play a role in dendrite postsynaptic membrane trafficking. This chain is Trafficking protein particle complex subunit 4, found in Mus musculus (Mouse).